The primary structure comprises 131 residues: MSMSDPIADMLTRIRNAQLVKKKEVNVPSSNLKFAIAGVMQQEGYIESFSVNGVVASKILKIKLKYYDNKPVIEKLKRISKPSLRVYVSNSKIPSVMNGLGIVIVSTPKGVMTGQVALDQNVGGEVLCSIY.

Belongs to the universal ribosomal protein uS8 family. Part of the 30S ribosomal subunit. Contacts proteins S5 and S12.

Functionally, one of the primary rRNA binding proteins, it binds directly to 16S rRNA central domain where it helps coordinate assembly of the platform of the 30S subunit. The sequence is that of Small ribosomal subunit protein uS8 from Vesicomyosocius okutanii subsp. Calyptogena okutanii (strain HA).